A 336-amino-acid chain; its full sequence is Ornithine carbamoyltransferase, catabolic (336 aa).

Carbamoyl phosphate-binding positions include 57–60 (STRT), Q84, R108, and 136–139 (HPTQ). L-ornithine is bound by residues N169, D233, and 237–238 (SM). Carbamoyl phosphate contacts are provided by residues 275-276 (CL) and R322.

It belongs to the aspartate/ornithine carbamoyltransferase superfamily. OTCase family.

The protein localises to the cytoplasm. The catalysed reaction is carbamoyl phosphate + L-ornithine = L-citrulline + phosphate + H(+). Its pathway is amino-acid degradation; L-arginine degradation via ADI pathway; carbamoyl phosphate from L-arginine: step 2/2. Reversibly catalyzes the transfer of the carbamoyl group from carbamoyl phosphate (CP) to the N(epsilon) atom of ornithine (ORN) to produce L-citrulline. In Chromobacterium violaceum (strain ATCC 12472 / DSM 30191 / JCM 1249 / CCUG 213 / NBRC 12614 / NCIMB 9131 / NCTC 9757 / MK), this protein is Ornithine carbamoyltransferase, catabolic.